A 729-amino-acid chain; its full sequence is Fatty acid oxidation complex subunit alpha (729 aa).

An enoyl-CoA hydratase/isomerase region spans residues 1-189; it reads MLYKGDTLYL…KIGLVDGVVA (189 aa). Aspartate 296 lines the substrate pocket. The segment at 311–729 is 3-hydroxyacyl-CoA dehydrogenase; that stretch reads ETPKHAAVLG…ARPVGALKTA (419 aa). NAD(+)-binding positions include methionine 324, aspartate 343, 400–402, lysine 407, and serine 429; that span reads VVE. The active-site For 3-hydroxyacyl-CoA dehydrogenase activity is the histidine 450. Asparagine 453 contacts NAD(+). 2 residues coordinate substrate: asparagine 500 and tyrosine 660.

It in the N-terminal section; belongs to the enoyl-CoA hydratase/isomerase family. The protein in the C-terminal section; belongs to the 3-hydroxyacyl-CoA dehydrogenase family. As to quaternary structure, heterotetramer of two alpha chains (FadB) and two beta chains (FadA).

The enzyme catalyses a (3S)-3-hydroxyacyl-CoA + NAD(+) = a 3-oxoacyl-CoA + NADH + H(+). It catalyses the reaction a (3S)-3-hydroxyacyl-CoA = a (2E)-enoyl-CoA + H2O. The catalysed reaction is a 4-saturated-(3S)-3-hydroxyacyl-CoA = a (3E)-enoyl-CoA + H2O. It carries out the reaction (3S)-3-hydroxybutanoyl-CoA = (3R)-3-hydroxybutanoyl-CoA. The enzyme catalyses a (3Z)-enoyl-CoA = a 4-saturated (2E)-enoyl-CoA. It catalyses the reaction a (3E)-enoyl-CoA = a 4-saturated (2E)-enoyl-CoA. The protein operates within lipid metabolism; fatty acid beta-oxidation. Functionally, involved in the aerobic and anaerobic degradation of long-chain fatty acids via beta-oxidation cycle. Catalyzes the formation of 3-oxoacyl-CoA from enoyl-CoA via L-3-hydroxyacyl-CoA. It can also use D-3-hydroxyacyl-CoA and cis-3-enoyl-CoA as substrate. The protein is Fatty acid oxidation complex subunit alpha of Klebsiella pneumoniae subsp. pneumoniae (strain ATCC 700721 / MGH 78578).